A 299-amino-acid polypeptide reads, in one-letter code: MYSSIVPSSSNGYYHQSQYQNAHHQHHQQHYHQQSHHHYNGAAAAPVINVHNYHFHTGPVNNQVIEQHYNHHNHVQQTFEENIPQGPHSSFNFSHDFPQQNNSETHLNHMEPSMTPMEHQNSGSSTPYPFEAKLFVPSPAASVSSYSFSSDLSGKDEEDPRIPLKDRGRVYHPQSTEKPKKVPSKRRDKATLDRLRVHKCFYQGCGKVYTKSSHLTAHERVHSGEKPYPCEWPGCSWRFARSDELTRHYRKHTGAKPFACKECSRKFSRSDHLQLHMKRHETDEQDDGMDDFKDFMTFI.

2 disordered regions span residues 19 to 38 (YQNA…SHHH) and 146 to 189 (YSFS…RRDK). Over residues 23 to 38 (HHQHHQQHYHQQSHHH) the composition is skewed to basic residues. Positions 153–180 (SGKDEEDPRIPLKDRGRVYHPQSTEKPK) are enriched in basic and acidic residues. C2H2-type zinc fingers lie at residues 198 to 222 (HKCF…ERVH), 228 to 252 (YPCE…YRKH), and 258 to 280 (FACK…MKRH).

Belongs to the krueppel C2H2-type zinc-finger protein family. As to expression, expressed predominantly in intestine.

The protein resides in the nucleus. Probable transcription factor which regulates lipid metabolism. The sequence is that of Kruppel-like factor 2 from Caenorhabditis elegans.